A 286-amino-acid polypeptide reads, in one-letter code: MTARELDAYFRSFLNFGPFVSCDVALNGLQVANSGAPVHKVAFAVDACAQSIDAAARAGARMLFVHHGLFWGRIEPLTGMQYRRVQALLTHDIALYAVHLPLDAHPQYGNNAGLAARVGLRQGGPFGFIRGTAVGLWGTVAENTTPSQEAMQQHAACTAPDTHRVTHANAISPSAGLSLQQVVHRLFPAEEQPVRLLPFGKQRIERVGILSGKAGTYLAEAIALDLDLFITGEIEHSCYHTAREHSISVIAGGHYQTETVGLQLVARKLQRDTGIETLFLDIPTGM.

Residues H66, H67, D103, H254, and E258 each contribute to the a divalent metal cation site.

This sequence belongs to the GTP cyclohydrolase I type 2/NIF3 family. In terms of assembly, homohexamer.

This Treponema pallidum (strain Nichols) protein is GTP cyclohydrolase 1 type 2 homolog.